Here is a 507-residue protein sequence, read N- to C-terminus: MTEQKYIVALDQGTTSSRAVILDHDANIVSSSQREFTQIYPKAGWVEHDPMEIWATQSSTLVEALAKAGIRSDELAGIGITNQRETTIVWNKETGKPVYNAIVWQCRRTADICEDLKARGLEDYVRDNTGLVLDPYFSGTKVKWILDNVEGAREDAEAGKLLFGTVDTWLVWKMTQGRVHVTDYTNASRTMLFNINDLCWDQKLLDEMGIPSSMMPEVKRSSEVYGQTNLGGKGGTRIPIAGIAGDQQAALYGQMCVEAGQAKNTYGTGCFLLMNTGQEKVTSKNGLLTTLACGPKGEPAYALEGAVFMGGASIQWLRDEMKLLAGAEDSEYFATKVDSSNGVYVVPAFTGLGAPYWDAYARGTIVGLTRGVNSNHIIRATLEGIAYQTRDVLDAMQADSGIKLANLRVDGGAVANNFLMQFQSDVLDTEVHRPEVTEVTALGAAYLAGLAVGFWDSIDELQDKAVLNRTFMPHHDEEKRNRRYKGWKRAIKCAQVWSELHDDDDEE.

Position 14 (threonine 14) interacts with ADP. Residues threonine 14, threonine 15, and serine 16 each contribute to the ATP site. Threonine 14 serves as a coordination point for sn-glycerol 3-phosphate. Residue arginine 18 coordinates ADP. The sn-glycerol 3-phosphate site is built by arginine 84, glutamate 85, tyrosine 136, and aspartate 246. Positions 84, 85, 136, 246, and 247 each coordinate glycerol. 2 residues coordinate ADP: threonine 268 and glycine 311. Residues threonine 268, glycine 311, glutamine 315, and glycine 412 each contribute to the ATP site. 2 residues coordinate ADP: glycine 412 and asparagine 416.

This sequence belongs to the FGGY kinase family.

The catalysed reaction is glycerol + ATP = sn-glycerol 3-phosphate + ADP + H(+). It participates in polyol metabolism; glycerol degradation via glycerol kinase pathway; sn-glycerol 3-phosphate from glycerol: step 1/1. Its activity is regulated as follows. Inhibited by fructose 1,6-bisphosphate (FBP). In terms of biological role, key enzyme in the regulation of glycerol uptake and metabolism. Catalyzes the phosphorylation of glycerol to yield sn-glycerol 3-phosphate. In Vibrio atlanticus (strain LGP32) (Vibrio splendidus (strain Mel32)), this protein is Glycerol kinase.